The following is a 346-amino-acid chain: N-acetyl-gamma-glutamyl-phosphate reductase (346 aa).

Cys149 is an active-site residue.

This sequence belongs to the NAGSA dehydrogenase family. Type 1 subfamily.

It is found in the cytoplasm. The catalysed reaction is N-acetyl-L-glutamate 5-semialdehyde + phosphate + NADP(+) = N-acetyl-L-glutamyl 5-phosphate + NADPH + H(+). It functions in the pathway amino-acid biosynthesis; L-arginine biosynthesis; N(2)-acetyl-L-ornithine from L-glutamate: step 3/4. In terms of biological role, catalyzes the NADPH-dependent reduction of N-acetyl-5-glutamyl phosphate to yield N-acetyl-L-glutamate 5-semialdehyde. This chain is N-acetyl-gamma-glutamyl-phosphate reductase, found in Pelobacter propionicus (strain DSM 2379 / NBRC 103807 / OttBd1).